A 177-amino-acid polypeptide reads, in one-letter code: Flavodoxin (177 aa).

Positions 4-173 (IGIFFGSDTG…RIDSWLEKLK (170 aa)) constitute a Flavodoxin-like domain.

It belongs to the flavodoxin family. It depends on FMN as a cofactor.

Functionally, low-potential electron donor to a number of redox enzymes. NifF is the electron donor to nitrogenase. The polypeptide is Flavodoxin (nifF) (Enterobacter agglomerans (Erwinia herbicola)).